Here is a 326-residue protein sequence, read N- to C-terminus: ELMO domain-containing protein 1 (326 aa).

The ELMO domain maps to 133 to 306; sequence QHEEMLLKLW…KFRKRIIKQL (174 aa).

Functionally, acts as a GTPase-activating protein (GAP) toward guanine nucleotide exchange factors like ARL2, ARL3, ARF1 and ARF6, but not for GTPases outside the Arf family. This Pongo abelii (Sumatran orangutan) protein is ELMO domain-containing protein 1 (ELMOD1).